The following is a 166-amino-acid chain: Regulatory protein RecX (166 aa).

The protein belongs to the RecX family.

The protein resides in the cytoplasm. Its function is as follows. Modulates RecA activity. In Escherichia fergusonii (strain ATCC 35469 / DSM 13698 / CCUG 18766 / IAM 14443 / JCM 21226 / LMG 7866 / NBRC 102419 / NCTC 12128 / CDC 0568-73), this protein is Regulatory protein RecX.